A 476-amino-acid chain; its full sequence is Protein transport protein Sec61 subunit alpha-like 2 (476 aa).

Residues 2–33 (AIKFLEVIKPFCAVLPEIQKPERRIQFKEKVL) lie on the Cytoplasmic side of the membrane. Residues 34 to 53 (WTAITLFIFLVCCQIPLFGI) traverse the membrane as a helical segment. The Lumenal segment spans residues 54 to 76 (MSSDSADPFYWMRVIMASNRGTL). A helical membrane pass occupies residues 77–96 (MELGISPIVTSGLIMQLLAG). At 97–117 (AKIIEVGDTPKDRALFNGAQK) the chain is on the cytoplasmic side. A helical membrane pass occupies residues 118-138 (LFGMIITIGQAVVYVMTGMYG). At 139 to 144 (DPSEMG) the chain is on the lumenal side. Residues 145–165 (AGICLLIIIQLFVAGLIVLLL) traverse the membrane as a helical segment. At 166 to 172 (DELLQKG) the chain is on the cytoplasmic side. The helical transmembrane segment at 173–193 (YGLGSGISLFIATNICETIVW) threads the bilayer. Topologically, residues 194–240 (KAFSPTTVNTGRGTEFEGAIIALFHLLATRTDKVRALREAFYRQNLP) are lumenal. A helical membrane pass occupies residues 241–261 (NLMNLIATIFVFAVVIYFQGF). Residues 262-288 (RVDLPIKSARYRGQYNTYPIKLFYTSN) are Cytoplasmic-facing. A helical membrane pass occupies residues 289–309 (IPIILQSALVSNLYVISQMLS). Over 310–354 (TRFSGNFLVNLLGTWSDTSTGGPARAYPVGGLCYYLSPPESFGTV) the chain is Lumenal. A helical membrane pass occupies residues 355-375 (LEDPIHAIIYIIFMLGSCAFF). Over 376-420 (SKTWIEVSGSSAKDVAKQLKEQQMVMRGHRETSMVHELNRYIPTA) the chain is Cytoplasmic. Residues 421–441 (AAFGGLCIGGLSVMADFLGAI) traverse the membrane as a helical segment. Residues 442-445 (GSGT) are Lumenal-facing. A helical transmembrane segment spans residues 446–462 (GILLAVTIIYQYFEIFV). At 463–476 (KEQSEVGSVGALLF) the chain is on the cytoplasmic side.

The protein belongs to the SecY/SEC61-alpha family. The SEC61 channel-forming translocon complex consists of channel-forming core components SEC61A1, SEC61B and SEC61G and different auxiliary components such as SEC62 and SEC63.

It localises to the endoplasmic reticulum membrane. Component of SEC61 channel-forming translocon complex that mediates transport of signal peptide-containing precursor polypeptides across the endoplasmic reticulum (ER). Forms a ribosome receptor and a gated pore in the ER membrane, both functions required for cotranslational translocation of nascent polypeptides. This chain is Protein transport protein Sec61 subunit alpha-like 2 (sec61al2), found in Danio rerio (Zebrafish).